Consider the following 205-residue polypeptide: MVYSMDLMPIILASQSESRLRLLKKINIVPSQIIPANIDESSLPAELPKNLALRLAIQKADKIAQNIEDGYVIAADTVVAVGRRILPKTITDFDVEYCLKMLSGRRHRVFTGVKITKVKHNNIIAFNTRTVESIVKVKRLTPQEIATYVATKQGLNKAGGHSIEGMWECFIQFMRGSYSNIMGLPLFETRNMLFSLGFDCIRSNQ.

The active-site Proton acceptor is aspartate 76.

The protein belongs to the Maf family. It depends on a divalent metal cation as a cofactor.

Its subcellular location is the cytoplasm. The catalysed reaction is a ribonucleoside 5'-triphosphate + H2O = a ribonucleoside 5'-phosphate + diphosphate + H(+). It catalyses the reaction a 2'-deoxyribonucleoside 5'-triphosphate + H2O = a 2'-deoxyribonucleoside 5'-phosphate + diphosphate + H(+). Nucleoside triphosphate pyrophosphatase. May have a dual role in cell division arrest and in preventing the incorporation of modified nucleotides into cellular nucleic acids. This chain is Nucleoside triphosphate pyrophosphatase, found in Orientia tsutsugamushi (strain Boryong) (Rickettsia tsutsugamushi).